A 132-amino-acid polypeptide reads, in one-letter code: Small ribosomal subunit protein uS8 (132 aa).

Belongs to the universal ribosomal protein uS8 family. Part of the 30S ribosomal subunit. Contacts proteins S5 and S12.

Its function is as follows. One of the primary rRNA binding proteins, it binds directly to 16S rRNA central domain where it helps coordinate assembly of the platform of the 30S subunit. In Mycobacterium bovis (strain ATCC BAA-935 / AF2122/97), this protein is Small ribosomal subunit protein uS8.